Here is a 480-residue protein sequence, read N- to C-terminus: Probable histone deacetylase 1-A (480 aa).

A histone deacetylase region spans residues 10–321 (KVCYYYDGDV…WTYETAVALD (312 aa)). Histidine 141 is an active-site residue. The tract at residues 388–480 (SIHDDSGEED…KRVKEETKSV (93 aa)) is disordered. The span at 401 to 416 (PDKRISIRSSDKRIAC) shows a compositional bias: basic and acidic residues. Positions 417–427 (DEEFSDSEDEG) are enriched in acidic residues. The span at 443–480 (VKTEEEKEGEDKKDVKEEEKAKDEKTDSKRVKEETKSV) shows a compositional bias: basic and acidic residues.

The protein belongs to the histone deacetylase family. HD type 1 subfamily. Part of a large multiprotein complex that also contains RBBP4. In terms of tissue distribution, oocyte.

It is found in the nucleus. It localises to the cytoplasm. It carries out the reaction N(6)-acetyl-L-lysyl-[histone] + H2O = L-lysyl-[histone] + acetate. The catalysed reaction is N(6)-acetyl-L-lysyl-[protein] + H2O = L-lysyl-[protein] + acetate. The enzyme catalyses N(6)-(2E)-butenoyl-L-lysyl-[protein] + H2O = (2E)-2-butenoate + L-lysyl-[protein]. Histone deacetylase that catalyzes the deacetylation of lysine residues on the N-terminal part of the core histones (H2A, H2B, H3 and H4). Histone deacetylation gives a tag for epigenetic repression and plays an important role in transcriptional regulation, cell cycle progression and developmental events. Histone deacetylases act via the formation of large multiprotein complexes. Also functions as deacetylase for non-histone proteins. In addition to protein deacetylase activity, also has protein-lysine deacylase activity: acts as a protein decrotonylase by mediating decrotonylation ((2E)-butenoyl) of histones. The polypeptide is Probable histone deacetylase 1-A (hdac1-a) (Xenopus laevis (African clawed frog)).